The chain runs to 254 residues: MMKGWMKCGLAGAVVLMASFWGGSVRAAGMSLTQVSGPVYVVEDNYYVQENSMVYFGAKGVTVVGATWTPDTARELHKLIKRVSRKPVLEVINTNYHTDRAGGNAYWKSIGAKVVSTRQTRDLMKSDWAEIVAFTRKGLPEYPDLPLVLPNVVHDGDFTLQEGKVRAFYAGPAHTPDGIFVYFPDEQVLYGNCILKEKLGNLSFADVKAYPQTLERLKAMKLPIKTVIGGHDSPLHGPELIDHYEALIKAAPQS.

The first 27 residues, 1-27 (MMKGWMKCGLAGAVVLMASFWGGSVRA), serve as a signal peptide directing secretion. Zn(2+) is bound at residue Asp-99. Residues Thr-135 and His-174 each coordinate substrate. Cys-193 contacts Zn(2+). Positions 196 and 201 each coordinate substrate. Zn(2+) is bound at residue His-231.

Belongs to the metallo-beta-lactamase superfamily. Class-B beta-lactamase family. As to quaternary structure, monomer. Requires Zn(2+) as cofactor.

The protein localises to the periplasm. It carries out the reaction a beta-lactam + H2O = a substituted beta-amino acid. Its activity is regulated as follows. Competitively inhibited by mercaptophosphonate and pyridine carboxylate derivatives. Also inhibited by the binding of a second zinc ion and by chelating agents such as EDTA. In terms of biological role, confers resistance to the different beta-lactams antibiotics (penicillin, cephalosporin and carbapenem) via the hydrolysis of the beta-lactam ring. It is able to hydrolyze penicillin and imipenem, but is much less active against cephalothin, cefotaxime, meropenem and ceftazidime. This is Metallo-beta-lactamase type 2 from Aeromonas hydrophila.